The sequence spans 427 residues: Glutamate-1-semialdehyde 2,1-aminomutase (427 aa).

Residue lysine 267 is modified to N6-(pyridoxal phosphate)lysine.

Belongs to the class-III pyridoxal-phosphate-dependent aminotransferase family. HemL subfamily. Homodimer. Pyridoxal 5'-phosphate is required as a cofactor.

Its subcellular location is the cytoplasm. The catalysed reaction is (S)-4-amino-5-oxopentanoate = 5-aminolevulinate. It participates in porphyrin-containing compound metabolism; protoporphyrin-IX biosynthesis; 5-aminolevulinate from L-glutamyl-tRNA(Glu): step 2/2. The polypeptide is Glutamate-1-semialdehyde 2,1-aminomutase (Geobacter sulfurreducens (strain ATCC 51573 / DSM 12127 / PCA)).